Reading from the N-terminus, the 147-residue chain is Ubiquitin-conjugating enzyme E2 4 (147 aa).

In terms of domain architecture, UBC core spans 1–147; that stretch reads MALKRINREL…AREWTRKYAI (147 aa). Residue Cys-85 is the Glycyl thioester intermediate of the active site.

Belongs to the ubiquitin-conjugating enzyme family. As to quaternary structure, interacts with the E1 ubiquitin-activating enzyme ptr3 and E3 ubiquitin-protein ligase pub2.

The catalysed reaction is S-ubiquitinyl-[E1 ubiquitin-activating enzyme]-L-cysteine + [E2 ubiquitin-conjugating enzyme]-L-cysteine = [E1 ubiquitin-activating enzyme]-L-cysteine + S-ubiquitinyl-[E2 ubiquitin-conjugating enzyme]-L-cysteine.. It participates in protein modification; protein ubiquitination. In terms of biological role, E2 ubiquitin-conjugating enzyme that catalyzes the covalent attachment of ubiquitin to other proteins. Mediates the selective degradation of short-lived and abnormal proteins. Mediates ubiquitination of pex5. This chain is Ubiquitin-conjugating enzyme E2 4 (ubc4), found in Schizosaccharomyces pombe (strain 972 / ATCC 24843) (Fission yeast).